A 241-amino-acid chain; its full sequence is 7-cyano-7-deazaguanine synthase (241 aa).

9–19 (LSGGLDSSTVL) provides a ligand contact to ATP. The Zn(2+) site is built by C189, C197, C200, and C203.

The protein belongs to the QueC family. Requires Zn(2+) as cofactor.

It carries out the reaction 7-carboxy-7-deazaguanine + NH4(+) + ATP = 7-cyano-7-deazaguanine + ADP + phosphate + H2O + H(+). It participates in purine metabolism; 7-cyano-7-deazaguanine biosynthesis. Catalyzes the ATP-dependent conversion of 7-carboxy-7-deazaguanine (CDG) to 7-cyano-7-deazaguanine (preQ(0)). This chain is 7-cyano-7-deazaguanine synthase, found in Thermoplasma volcanium (strain ATCC 51530 / DSM 4299 / JCM 9571 / NBRC 15438 / GSS1).